The sequence spans 685 residues: Protein arginine N-methyltransferase 7 (685 aa).

SAM-dependent MTase PRMT-type domains follow at residues Gln14–Trp355 and Ala364–Ile685.

This sequence belongs to the class I-like SAM-binding methyltransferase superfamily. Protein arginine N-methyltransferase family. PRMT7 subfamily.

Essential arginine methyltransferase that can both catalyze the formation of omega-N monomethylarginine (MMA) and symmetrical dimethylarginine (sDMA). Specifically mediates the symmetrical dimethylation of arginine residues in the small nuclear ribonucleoproteins SmD1 and SmD3. The sequence is that of Protein arginine N-methyltransferase 7 (Art7) from Drosophila willistoni (Fruit fly).